Here is a 354-residue protein sequence, read N- to C-terminus: Alternative oxidase, mitochondrial (354 aa).

A mitochondrion-targeting transit peptide spans 1 to 64 (MNSMSTTGPI…RFISSTPQSQ (64 aa)). A helical transmembrane segment spans residues 153–173 (FVFLESVAGVPGMVGGMLRHL). Fe cation contacts are provided by Glu-157, Glu-196, and His-199. Residues 215–235 (LMVLGAQGVFFNGFFLSYLIS) traverse the membrane as a helical segment. Residues Glu-247, Glu-302, and His-305 each contribute to the Fe cation site. A disordered region spans residues 333–354 (KPHPGKGIKHLKTTGWEREEVV). A compositionally biased stretch (basic residues) spans 335–344 (HPGKGIKHLK).

It belongs to the alternative oxidase family. Fe cation is required as a cofactor.

It localises to the mitochondrion inner membrane. Functionally, catalyzes cyanide-resistant oxygen consumption. May increase respiration when the cytochrome respiratory pathway is restricted, or in response to low temperatures. This is Alternative oxidase, mitochondrial (alxA) from Emericella nidulans (strain FGSC A4 / ATCC 38163 / CBS 112.46 / NRRL 194 / M139) (Aspergillus nidulans).